Here is a 536-residue protein sequence, read N- to C-terminus: CTP synthase (536 aa).

Residues 1-267 form an amidoligase domain region; it reads MSKFVFVTGG…CKETLKYLEL (267 aa). CTP is bound at residue serine 13. Serine 13 contacts UTP. ATP-binding positions include 14 to 19 and aspartate 71; that span reads SIGKGI. 2 residues coordinate Mg(2+): aspartate 71 and glutamate 141. CTP-binding positions include 148-150, 188-193, and lysine 224; these read DIE and KTKPTQ. UTP contacts are provided by residues 188-193 and lysine 224; that span reads KTKPTQ. In terms of domain architecture, Glutamine amidotransferase type-1 spans 292 to 534; it reads KVALVGKYIE…IKASQEKLTQ (243 aa). Glycine 354 contributes to the L-glutamine binding site. Cysteine 381 serves as the catalytic Nucleophile; for glutamine hydrolysis. Residues 382 to 385, glutamate 405, and arginine 462 contribute to the L-glutamine site; that span reads LGMQ. Residues histidine 507 and glutamate 509 contribute to the active site.

This sequence belongs to the CTP synthase family. In terms of assembly, homotetramer.

It carries out the reaction UTP + L-glutamine + ATP + H2O = CTP + L-glutamate + ADP + phosphate + 2 H(+). It catalyses the reaction L-glutamine + H2O = L-glutamate + NH4(+). The enzyme catalyses UTP + NH4(+) + ATP = CTP + ADP + phosphate + 2 H(+). Its pathway is pyrimidine metabolism; CTP biosynthesis via de novo pathway; CTP from UDP: step 2/2. With respect to regulation, allosterically activated by GTP, when glutamine is the substrate; GTP has no effect on the reaction when ammonia is the substrate. The allosteric effector GTP functions by stabilizing the protein conformation that binds the tetrahedral intermediate(s) formed during glutamine hydrolysis. Inhibited by the product CTP, via allosteric rather than competitive inhibition. Catalyzes the ATP-dependent amination of UTP to CTP with either L-glutamine or ammonia as the source of nitrogen. Regulates intracellular CTP levels through interactions with the four ribonucleotide triphosphates. The polypeptide is CTP synthase (Prochlorococcus marinus (strain MIT 9215)).